The following is a 236-amino-acid chain: uncharacterized protein (236 aa).

Residues Asp22, Asn49, and Lys82 each contribute to the NADP(+) site. Residues Ser100 and Tyr114 each act as proton donor in the active site. Tyr114 and Lys118 together coordinate NADP(+). The active-site Lowers pKa of active site Tyr is the Lys118.

This sequence belongs to the short-chain dehydrogenases/reductases (SDR) family.

It is found in the cytoplasm. The protein resides in the nucleus. This is an uncharacterized protein from Schizosaccharomyces pombe (strain 972 / ATCC 24843) (Fission yeast).